Here is a 373-residue protein sequence, read N- to C-terminus: MRFQVEREVLAEGIGWVARGLAVRPSVPILSGVVVNAEGDTLTLSGFDYEVSTRVELKANVEESGTVLIPGRRLADIAKVLPDVPIEFNVDQTKVYVQCDSNSFVLNALPLDEYPTLPKLPTVCGSVEGDQFARAVSQVAVVASRDDALPVLTGIGVNFDGEIMKLNATDRYRFAIRELAWKPEGTPSSSSVLVPARTLLDFAKSLNKGDLVKIALSDEGNLLGLHAGTRQMTCRLLEGTLPDYEKLFPKEFTSFGAVEVSRLVEALKRVSLVLERNSSVALDFTDGELVLQAGGADDDRATSRMAASLEGESIDIAFNPSFLLDGLTNLDASWAQFSFTSSNGKAVIMGKSSVDAEADTSARYLVMPVRFHR.

This sequence belongs to the beta sliding clamp family. As to quaternary structure, forms a ring-shaped head-to-tail homodimer around DNA which binds and tethers DNA polymerases and other proteins to the DNA. The DNA replisome complex has a single clamp-loading complex (3 tau and 1 each of delta, delta', psi and chi subunits) which binds 3 Pol III cores (1 core on the leading strand and 2 on the lagging strand) each with a beta sliding clamp dimer. Additional proteins in the replisome are other copies of gamma, psi and chi, Ssb, DNA helicase and RNA primase.

Its subcellular location is the cytoplasm. Functionally, a homolog of the beta sliding clamp protein encoded within the biosynthetic cluster for griselimycin synthesis. Upon expression in S.coelicolor A3(2), which is susceptible to this antibiotic, confers resistance to griselimycin. The beta sliding clamp confers DNA tethering and processivity to DNA polymerases and other proteins. Acts as a clamp, forming a ring around DNA (a reaction catalyzed by the clamp-loading complex) which diffuses in an ATP-independent manner freely and bidirectionally along dsDNA. Initially characterized for its ability to contact the catalytic subunit of DNA polymerase III (Pol III), a complex, multichain enzyme responsible for most of the replicative synthesis in bacteria; Pol III exhibits 3'-5' exonuclease proofreading activity. The beta chain is required for initiation of replication as well as for processivity of DNA replication. The chain is Beta sliding clamp homolog GriR from Streptomyces muensis.